Consider the following 110-residue polypeptide: Phosphoribosyl-ATP pyrophosphatase (110 aa).

It belongs to the PRA-PH family.

It localises to the cytoplasm. The enzyme catalyses 1-(5-phospho-beta-D-ribosyl)-ATP + H2O = 1-(5-phospho-beta-D-ribosyl)-5'-AMP + diphosphate + H(+). It participates in amino-acid biosynthesis; L-histidine biosynthesis; L-histidine from 5-phospho-alpha-D-ribose 1-diphosphate: step 2/9. This chain is Phosphoribosyl-ATP pyrophosphatase, found in Hahella chejuensis (strain KCTC 2396).